Here is a 130-residue protein sequence, read N- to C-terminus: Large ribosomal subunit protein bL12 (130 aa).

The protein belongs to the bacterial ribosomal protein bL12 family. As to quaternary structure, homodimer. Part of the ribosomal stalk of the 50S ribosomal subunit. Forms a multimeric L10(L12)X complex, where L10 forms an elongated spine to which 2 to 4 L12 dimers bind in a sequential fashion. Binds GTP-bound translation factors.

Functionally, forms part of the ribosomal stalk which helps the ribosome interact with GTP-bound translation factors. Is thus essential for accurate translation. The polypeptide is Large ribosomal subunit protein bL12 (Herpetosiphon aurantiacus (strain ATCC 23779 / DSM 785 / 114-95)).